A 141-amino-acid chain; its full sequence is Large ribosomal subunit protein uL11 (141 aa).

Belongs to the universal ribosomal protein uL11 family. As to quaternary structure, part of the ribosomal stalk of the 50S ribosomal subunit. Interacts with L10 and the large rRNA to form the base of the stalk. L10 forms an elongated spine to which L12 dimers bind in a sequential fashion forming a multimeric L10(L12)X complex. In terms of processing, one or more lysine residues are methylated.

Its function is as follows. Forms part of the ribosomal stalk which helps the ribosome interact with GTP-bound translation factors. The chain is Large ribosomal subunit protein uL11 from Exiguobacterium sibiricum (strain DSM 17290 / CCUG 55495 / CIP 109462 / JCM 13490 / 255-15).